Here is a 515-residue protein sequence, read N- to C-terminus: Bifunctional purine biosynthesis protein PurH (515 aa).

The MGS-like domain maps to 1-145 (MTKRALISVS…KNHASVTVVV (145 aa)).

This sequence belongs to the PurH family.

It carries out the reaction (6R)-10-formyltetrahydrofolate + 5-amino-1-(5-phospho-beta-D-ribosyl)imidazole-4-carboxamide = 5-formamido-1-(5-phospho-D-ribosyl)imidazole-4-carboxamide + (6S)-5,6,7,8-tetrahydrofolate. It catalyses the reaction IMP + H2O = 5-formamido-1-(5-phospho-D-ribosyl)imidazole-4-carboxamide. It functions in the pathway purine metabolism; IMP biosynthesis via de novo pathway; 5-formamido-1-(5-phospho-D-ribosyl)imidazole-4-carboxamide from 5-amino-1-(5-phospho-D-ribosyl)imidazole-4-carboxamide (10-formyl THF route): step 1/1. The protein operates within purine metabolism; IMP biosynthesis via de novo pathway; IMP from 5-formamido-1-(5-phospho-D-ribosyl)imidazole-4-carboxamide: step 1/1. The sequence is that of Bifunctional purine biosynthesis protein PurH from Streptococcus mutans serotype c (strain ATCC 700610 / UA159).